A 43-amino-acid chain; its full sequence is Jararafibrase-3 (43 aa).

The region spanning 10–43 (MNGLYYKIFDELKAWKDAEMFCRKYKPGWHLASF) is the C-type lectin domain.

The protein belongs to the true venom lectin family. As to quaternary structure, monomer. Expressed by the venom gland.

The protein resides in the secreted. Its activity is regulated as follows. Inhibited by 1,10-phenanthroline and EDTA. May have both metalloproteinase and lectin activities. Induces local hemorrhage in the skin of rats. Degrades type-IV collagen, gelatin, laminin and fibronectin. Has hemagglutinating activity on red blood cells. The protein is Jararafibrase-3 of Bothrops jararaca (Jararaca).